We begin with the raw amino-acid sequence, 2629 residues long: Telomerase protein component 1 (2629 aa).

TEP1 N-terminal repeat units lie at residues 1–30, 31–60, 61–90, and 91–120; these read MEKLCGHVPGHSDILSLKNRCLTMLPDLQP, LEKIHGHRSVHSDILSLENQCLTMLSDLQP, TERIDGHISVHPDILSLENRCLTMLPDLQP, and LEKLCGHMSSHPDVLSLENQCLATLPTVKS. A TROVE domain is found at 227-685; it reads LKLTSGDSGF…VKHNLSPMPG (459 aa). Residues 386–397 show a composition bias toward basic residues; the sequence is PRKHRSKRRSRQ. The tract at residues 386 to 412 is disordered; sequence PRKHRSKRRSRQPPRPQKTERPFSERG. Basic and acidic residues predominate over residues 402 to 412; it reads QKTERPFSERG. Residues 1171–1578 form the NACHT domain; it reads RLSLVTGQAG…EFLTNLHVVA (408 aa). 1177–1184 is a binding site for ATP; sequence GQAGQGKT. 21 WD repeats span residues 1420 to 1462, 1681 to 1720, 1723 to 1761, 1764 to 1803, 1805 to 1844, 1847 to 1886, 1889 to 1930, 1932 to 1971, 1974 to 2013, 2015 to 2054, 2067 to 2106, 2113 to 2151, 2154 to 2191, 2193 to 2241, 2244 to 2282, 2285 to 2324, 2326 to 2362, 2375 to 2424, 2467 to 2507, 2555 to 2592, and 2594 to 2628; these read VLPQ…EVLA, TMSSSPTAVAFSPNGQRAAVGTASGTIYLLNLKTWQEEKA, SGCDGISSFAFLSDTALFLTTFDGHLELWDLQHGCWVFQ, AHQYQITGCCLSPDRRLLATVCLGGYLKLWDTVRGQLAFQ, THPKSLNCVAFHPEGQVVATGSWAGSITFFQADGLKVTKE, APGPSVCSLAFNKPGKIVAVGRIDGTVELWAWQEGARLAA, AQCG…GCLG, LPLSPALSVALNPDGDQVAVGYREDGINIYKISSGSQGPQ, ELNVAVSALVWLSPSVLVSGAEDGSLHGWMFKGDSLHSLW, LSRYQKPVLGLAASRELMAAASEDFTVRLWPRQLLTQPHV, GHEGPVCCCSFSPDGGILATAGRDRNLLCWDMKIAQAPLL, CHRDWITGCAWTKDNILVSCSSDGSVGLWNPEAGQQLGQ, GHQSAVSAVVAVEEHIVSVSRDGTLKVWDHQGVELTSI, AHSG…QIRT, GHSGPVTAAAASEASGLLLTSDDSSVQLWQIPKEADDSY, RSSVAITAVAWAPDGSMVVSGNEAGELTLWQQAKAVATAQ, PGRVSHLIWYSANSFFVLSANENVSEWQVGLRKGSTS, EDWG…SSIL, PNGS…GEWI, IHLGSVTALHVLPGLLVTASKDRDVKLWERPSMQLLGL, and RCEGPVSCLEPWMEPSSPLQLAVGDTQGNLYFLSW.

Associated component of the telomerase holoenzyme complex. Component of the vault ribonucleoprotein particle, at least composed of MVP, PARP4 and one or more vault RNAs (vRNAs). Binds to VAULTRC1, VAULTRC2 and VAULTRC4/hvg4 vRNAs. In terms of tissue distribution, ubiquitous.

It is found in the nucleus. The protein localises to the chromosome. The protein resides in the telomere. Component of the telomerase ribonucleoprotein complex that is essential for the replication of chromosome termini. Also a component of the ribonucleoprotein vaults particle, a multi-subunit structure involved in nucleo-cytoplasmic transport. Responsible for the localizing and stabilizing vault RNA (vRNA) association in the vault ribonucleoprotein particle. This chain is Telomerase protein component 1 (Tep1), found in Mus musculus (Mouse).